The chain runs to 81 residues: Protein Vpu (81 aa).

Residues 1-7 (MQSLQVL) are Extracellular-facing. The chain crosses the membrane as a helical span at residues 8-28 (AIVALVVATIIAIVVWTIVFI). Residues 29–81 (EYRKILRQRKIDRLINRITERAEDSGNESDGDQEELSALVERGHLAPWDVDDL) lie on the Cytoplasmic side of the membrane. Residues 50 to 81 (AEDSGNESDGDQEELSALVERGHLAPWDVDDL) form a disordered region. 2 positions are modified to phosphoserine; by host CK2: S53 and S57. Residues 53 to 63 (SGNESDGDQEE) show a composition bias toward acidic residues.

Belongs to the HIV-1 VPU protein family. As to quaternary structure, homopentamer. Interacts with host CD4 and BRTC; these interactions induce proteasomal degradation of CD4. Interacts with host BST2; this interaction leads to the degradation of host BST2. Interacts with host FBXW11. Interacts with host AP1M1; this interaction plays a role in the mistrafficking and subsequent degradation of host BST2. Interacts with host RANBP2; this interaction allows Vpu to down-regulate host BLM sumoylation. Post-translationally, phosphorylated by host CK2. This phosphorylation is necessary for interaction with human BTRC and degradation of CD4.

It localises to the host membrane. Ion channel activity is inhibited by hexamethylene amiloride in vitro. Its function is as follows. Enhances virion budding by targeting host CD4 and Tetherin/BST2 to proteasome degradation. Degradation of CD4 prevents any unwanted premature interactions between viral Env and its host receptor CD4 in the endoplasmic reticulum. Degradation of antiretroviral protein Tetherin/BST2 is important for virion budding, as BST2 tethers new viral particles to the host cell membrane. Mechanistically, Vpu bridges either CD4 or BST2 to BTRC, a substrate recognition subunit of the Skp1/Cullin/F-box protein E3 ubiquitin ligase, induces their ubiquitination and subsequent proteasomal degradation. The alteration of the E3 ligase specificity by Vpu seems to promote the degradation of host IKBKB, leading to NF-kappa-B down-regulation and subsequent apoptosis. Acts as a viroporin that forms an oligomeric ion channel in membranes. Modulates the host DNA repair mechanisms to promote degradation of nuclear viral cDNA in cells that are already productively infected in order to suppress immune sensing and proviral hyper-integration (superinfection). Manipulates PML-NBs and modulates SUMOylation of host BLM protein thereby enhancing its DNA-end processing activity toward viral unintegrated linear DNA. Also inhibits RAD52-mediated homologous repair of viral cDNA, preventing the generation of dead-end circular forms of single copies of the long terminal repeat and permitting sustained nucleolytic attack. The sequence is that of Protein Vpu from Human immunodeficiency virus type 1 group M subtype B (isolate YU-2) (HIV-1).